A 2353-amino-acid chain; its full sequence is C2 domain-containing protein 3 (2353 aa).

The segment at 1–27 is disordered; it reads MKQRKGQGSGGSRGRKKRGLSDISPST. A Phosphoserine modification is found at Ser-466. Disordered stretches follow at residues 488–508 and 549–568; these read KVLE…RNRN and GVPP…AGPP. The segment covering 496–507 has biased composition (basic residues); it reads KLKKRSAGKRNR. Residues 521-678 form the C2 1 domain; that stretch reads DAQTMTLSVD…IQSELLSFSD (158 aa). Phosphoserine is present on Ser-728. 4 C2 domains span residues 787 to 919, 985 to 1147, 1171 to 1339, and 1403 to 1533; these read SHNL…SRLL, QPTA…HRED, SSGL…TGWY, and EPAT…TLTV. The disordered stretch occupies residues 1569 to 1591; that stretch reads HELDSMDCSSHSESEQLPRRNDE. Residues 1617-1745 form the C2 6 domain; the sequence is TTAEVRLTQE…SGFQFVCGWY (129 aa). A disordered region spans residues 1822 to 1846; that stretch reads SKELDFSSPGRSDTTRSQASRHEEH. Residues 1830–1839 are compositionally biased toward polar residues; that stretch reads PGRSDTTRSQ. Phosphoserine is present on Ser-1891. 4 disordered regions span residues 1972–2032, 2084–2118, 2130–2269, and 2301–2334; these read ALSS…NGGR, TSPW…PGPF, LSSP…QSLL, and PAAT…LNLP. The segment covering 2007-2016 has biased composition (basic and acidic residues); the sequence is PLVRAPDKGT. Residues 2084-2098 show a composition bias toward polar residues; sequence TSPWSSVISDTSEVI. 2 positions are modified to phosphoserine: Ser-2114 and Ser-2132. Residues 2181 to 2198 show a composition bias toward polar residues; that stretch reads SGAQQSSTFVGWSSPQTD. Residues 2236-2253 show a composition bias toward basic and acidic residues; sequence SRRENHKGPPIDSSDIRQ. Positions 2254-2267 are enriched in polar residues; that stretch reads RQVTTGSETSTKQS.

Interacts with IFT88, BBS4 and PCM1. Interacts with OFD1; OFD1 may act as a negative regulator of C2CD3. Associates with the BBSome complex.

Its subcellular location is the cytoplasm. The protein localises to the cytoskeleton. It is found in the cilium basal body. The protein resides in the microtubule organizing center. It localises to the centrosome. Its subcellular location is the centriole. Its function is as follows. Component of the centrioles that acts as a positive regulator of centriole elongation. Promotes assembly of centriolar distal appendage, a structure at the distal end of the mother centriole that acts as an anchor of the cilium, and is required for recruitment of centriolar distal appendages proteins CEP83, SCLT1, CEP89, FBF1 and CEP164. Not required for centriolar satellite integrity or RAB8 activation. Required for primary cilium formation. Required for sonic hedgehog/SHH signaling and for proteolytic processing of GLI3. This chain is C2 domain-containing protein 3 (C2CD3), found in Homo sapiens (Human).